The chain runs to 381 residues: MSLNMFWFLPTHGDGHYLGTEAGSRPVDHGYLQQIAQTADRLGFTGVLIPTGRSCEDAWLVAASMIPVTQRLKFLVALRPSVTSPTVAARQAATLDRLSNGRALFNLVTGSDPQELAGDGVFLDHTERYEASSEFTQVWRRLLQGETVDFNGKHIHVRGAKLFFPAIQQPYPPLYFGGSSDVAQDLAAEQVDLYLTWGEPPAQVKEKIEQVRAKAAARGRKIRFGIRLHVIVRETNEEAWRAADRLIAHLDDDTIAKAQAAFARTDSVGQHRMAALHNGKRDQLEISPNLWAGVGLVRGGAGTALVGDGPTVAARINEYAALGIDSFVLSGYPHLEEAYNVGELLFPHLDVAIPEIPQPQPLHQQGEAVANEFIPRKAAQS.

The protein belongs to the SsuD family. Homotetramer.

It catalyses the reaction an alkanesulfonate + FMNH2 + O2 = an aldehyde + FMN + sulfite + H2O + 2 H(+). Catalyzes the desulfonation of aliphatic sulfonates. The sequence is that of Alkanesulfonate monooxygenase from Citrobacter koseri (strain ATCC BAA-895 / CDC 4225-83 / SGSC4696).